Reading from the N-terminus, the 467-residue chain is Interleukin-6 receptor subunit alpha (467 aa).

The first 19 residues, methionine 1–alanine 19, serve as a signal peptide directing secretion. Residues leucine 20 to alanine 112 enclose the Ig-like C2-type domain. The Extracellular portion of the chain corresponds to leucine 20–proline 365. Intrachain disulfides connect cysteine 25-cysteine 193, cysteine 47-cysteine 96, cysteine 121-cysteine 132, and cysteine 165-cysteine 176. Asparagine 55 and asparagine 93 each carry an N-linked (GlcNAc...) asparagine glycan. Fibronectin type-III domains are found at residues proline 113–aspartate 217 and proline 218–threonine 316. 2 N-linked (GlcNAc...) asparagine glycosylation sites follow: asparagine 221 and asparagine 245. The short motif at tryptophan 303–serine 307 is the WSXWS motif element. Residues tryptophan 315 to glutamine 357 form a disordered region. Composition is skewed to polar residues over residues glutamate 317–threonine 336 and lysine 346–glutamine 357. The N-linked (GlcNAc...) asparagine glycan is linked to asparagine 350. O-linked (GlcNAc) threonine glycosylation occurs at threonine 352. A helical transmembrane segment spans residues threonine 366–leucine 386. Over arginine 387–arginine 467 the chain is Cytoplasmic. A disordered region spans residues isoleucine 428–arginine 467.

The protein belongs to the type I cytokine receptor family. Type 3 subfamily. As to quaternary structure, component of a hexamer of two molecules each of IL6, IL6R and IL6ST; first binds to IL6 to associate with the signaling subunit IL6ST. Interacts (via N-terminal ectodomain) with SORL1; this interaction may affect IL6-binding to IL6R, hence decrease IL6 'classic-signaling'. Also interacts with SORL1; this interaction leads to soluble IL6R internalization. May form a trimeric complex with the soluble SORL1 ectodomain and circulating IL6 receptor; this interaction might stabilize circulating IL6, hence promote IL6 'trans-signaling'. In terms of processing, a short soluble form is also released from the membrane by proteolysis. The sIL6R is formed by limited proteolysis of membrane-bound receptors, a process referred to as ectodomain shedding. mIL6R is cleaved by the proteases ADAM10 and ADAM17. Glycosylated. Glycosylation is dispensable for transport, signaling, and cell-surface turnover. Glycosylation at Asn-55 is a protease-regulatory exosite. Glycosylation is required for ADAM17-mediated proteolysis. Expressed in liver.

It localises to the cell membrane. The protein localises to the secreted. With respect to regulation, classic and trans-signaling are both inhibited by tocilizumab, a humanized monoclonal antibody that blocks interleukin IL6R signaling. Functionally, part of the receptor for interleukin 6. Binds to IL6 with low affinity, but does not transduce a signal. Signal activation necessitate an association with IL6ST. Activation leads to the regulation of the immune response, acute-phase reactions and hematopoiesis. The interaction with membrane-bound IL6R and IL6ST stimulates 'classic signaling', the restricted expression of the IL6R limits classic IL6 signaling to only a few tissues such as the liver and some cells of the immune system. Whereas the binding of IL6 and soluble IL6R to IL6ST stimulates 'trans-signaling'. Alternatively, 'cluster signaling' occurs when membrane-bound IL6:IL6R complexes on transmitter cells activate IL6ST receptors on neighboring receiver cells. Signaling via the membrane-bound IL6R is mostly regenerative and anti-inflammatory. Drives naive CD4(+) T cells to the Th17 lineage, through 'cluster signaling' by dendritic cells. Its function is as follows. Soluble form of IL6 receptor (sIL6R) that acts as an agonist of IL6 activity. The IL6:sIL6R complex (hyper-IL6) binds to IL6ST/gp130 on cell surfaces and induces signaling also on cells that do not express membrane-bound IL6R in a process called IL6 'trans-signaling'. sIL6R is causative for the pro-inflammatory properties of IL6 and an important player in the development of chronic inflammatory diseases. In complex with IL6, is required for induction of VEGF production. Plays a protective role during liver injury, being required for maintenance of tissue regeneration. 'Trans-signaling' in central nervous system regulates energy and glucose homeostasis. The protein is Interleukin-6 receptor subunit alpha (IL6R) of Sus scrofa (Pig).